Reading from the N-terminus, the 1318-residue chain is Serine/threonine-protein kinase ppk18 (1318 aa).

The tract at residues 431-485 (PSVSPEEVHDISQFNHRNDPPITAASVDSSNSFSVHRSSTNHSSTNSGSPNLSRR) is disordered. The span at 462-479 (SFSVHRSSTNHSSTNSGS) shows a compositional bias: low complexity. Residues 566 to 934 (YEIIKPISKG…INEIKEHPFF (369 aa)) form the Protein kinase domain. Residues 572 to 580 (ISKGTFGTV) and Lys-595 contribute to the ATP site. Asp-690 acts as the Proton acceptor in catalysis. The AGC-kinase C-terminal domain maps to 935 to 1044 (NGINWDDIFS…KNLSVLERAN (110 aa)). 3 disordered regions span residues 968-1022 (GAAE…FSEA), 1058-1078 (KLHI…DMPS), and 1091-1127 (SLMT…GPKS). The span at 972 to 1000 (SNMSSSVNSGEEVSKDNNVSQERGSQFLR) shows a compositional bias: polar residues. Residues 1091–1115 (SLMTNQGSNFSSTDSTPRKSINSSD) are compositionally biased toward polar residues. Over residues 1116 to 1127 (VESRSKTDGPKS) the composition is skewed to basic and acidic residues. The Response regulatory domain occupies 1200–1316 (KALICVSKLN…LLRGYIARLC (117 aa)).

The protein belongs to the protein kinase superfamily. Ser/Thr protein kinase family.

It localises to the cytoplasm. The catalysed reaction is L-seryl-[protein] + ATP = O-phospho-L-seryl-[protein] + ADP + H(+). It carries out the reaction L-threonyl-[protein] + ATP = O-phospho-L-threonyl-[protein] + ADP + H(+). In Schizosaccharomyces pombe (strain 972 / ATCC 24843) (Fission yeast), this protein is Serine/threonine-protein kinase ppk18 (ppk18).